The sequence spans 401 residues: 3-sulfinopropanoyl-CoA desulfinase (401 aa).

FAD contacts are provided by residues 121 to 124, Ser-130, and 153 to 156; these read ICIS and YWIT. 243–244 is a binding site for substrate; it reads YN. FAD is bound by residues Arg-272, Gln-339, Ser-343, 366–370, and Gln-387; that span reads GGTAQ.

It belongs to the acyl-CoA dehydrogenase family. As to quaternary structure, homotetramer. The cofactor is FAD.

The enzyme catalyses 3-sulfinopropanoyl-CoA + H2O = propanoyl-CoA + sulfite + H(+). Its function is as follows. Catalyzes the conversion 3-sulfinopropanoyl-CoA (3SP-CoA) to propanoyl-CoA by abstraction of sulfite. Does not show dehydrogenase activity. Involved in the degradation of 3,3'-dithiodipropionate (DTDP), a sulfur-containing precursor substrate for biosynthesis of polythioesters (PTEs). The sequence is that of 3-sulfinopropanoyl-CoA desulfinase from Advenella mimigardefordensis (strain DSM 17166 / LMG 22922 / DPN7).